Here is a 437-residue protein sequence, read N- to C-terminus: 3-deoxy-D-manno-octulosonic acid transferase (437 aa).

A helical; Signal-anchor transmembrane segment spans residues 16-36 (VVLVCAFVIALPKLLYKMLVY). E70 (proton acceptor) is an active-site residue. CMP-binding positions include 279–280 (PR), 319–321 (IGL), and 346–349 (NLLE).

The protein belongs to the glycosyltransferase group 1 family. Glycosyltransferase 30 subfamily.

The protein localises to the cell inner membrane. The catalysed reaction is lipid IVA (E. coli) + CMP-3-deoxy-beta-D-manno-octulosonate = alpha-Kdo-(2-&gt;6)-lipid IVA (E. coli) + CMP + H(+). It catalyses the reaction alpha-Kdo-(2-&gt;6)-lipid IVA (E. coli) + CMP-3-deoxy-beta-D-manno-octulosonate = alpha-Kdo-(2-&gt;4)-alpha-Kdo-(2-&gt;6)-lipid IVA (E. coli) + CMP + H(+). It carries out the reaction alpha-Kdo-(2-&gt;4)-alpha-Kdo-(2-&gt;6)-lipid IVA (E. coli) + CMP-3-deoxy-beta-D-manno-octulosonate = alpha-Kdo-(2-&gt;8)-alpha-Kdo-(2-&gt;4)-alpha-Kdo-(2-&gt;6)-lipid IVA (E. coli) + CMP + H(+). The protein operates within bacterial outer membrane biogenesis; LPS core biosynthesis. Its function is as follows. Involved in lipopolysaccharide (LPS) biosynthesis. Catalyzes the transfer of three 3-deoxy-D-manno-octulosonate (Kdo) residues from CMP-Kdo to lipid IV(A), the tetraacyldisaccharide-1,4'-bisphosphate precursor of lipid A. Thus generates the genus-specific LPS epitope of Chlamydia, composed of the trisaccharide alpha-Kdo-(2-&gt;8)-alpha-Kdo-(2-&gt;4)-alpha-Kdo. This is 3-deoxy-D-manno-octulosonic acid transferase (waaA) from Chlamydia pneumoniae (Chlamydophila pneumoniae).